A 228-amino-acid chain; its full sequence is Ribosomal RNA small subunit methyltransferase G (228 aa).

S-adenosyl-L-methionine-binding positions include glycine 89, leucine 94, 140-141 (VE), and arginine 159.

Belongs to the methyltransferase superfamily. RNA methyltransferase RsmG family.

Its subcellular location is the cytoplasm. It catalyses the reaction guanosine(527) in 16S rRNA + S-adenosyl-L-methionine = N(7)-methylguanosine(527) in 16S rRNA + S-adenosyl-L-homocysteine. Specifically methylates the N7 position of guanine in position 527 of 16S rRNA. The protein is Ribosomal RNA small subunit methyltransferase G of Burkholderia cenocepacia (strain ATCC BAA-245 / DSM 16553 / LMG 16656 / NCTC 13227 / J2315 / CF5610) (Burkholderia cepacia (strain J2315)).